The chain runs to 258 residues: Phycoerythrobilin:ferredoxin oxidoreductase (258 aa).

The protein belongs to the HY2 family.

The catalysed reaction is (3Z)-phycoerythrobilin + oxidized 2[4Fe-4S]-[ferredoxin] = 15,16-dihydrobiliverdin + reduced 2[4Fe-4S]-[ferredoxin] + 2 H(+). Its function is as follows. Catalyzes the two-electron reduction of the C2 and C3(1) diene system of 15,16-dihydrobiliverdin. The protein is Phycoerythrobilin:ferredoxin oxidoreductase of Prochlorococcus marinus (strain NATL1A).